The following is a 357-amino-acid chain: Beta-hexosaminidase (357 aa).

Substrate is bound by residues Asp-72, Arg-80, Arg-146, and 176–177 (KH). Residue His-189 is the Proton donor/acceptor of the active site. Asp-260 serves as the catalytic Nucleophile.

It belongs to the glycosyl hydrolase 3 family. NagZ subfamily.

The protein resides in the cytoplasm. The enzyme catalyses Hydrolysis of terminal non-reducing N-acetyl-D-hexosamine residues in N-acetyl-beta-D-hexosaminides.. It functions in the pathway cell wall biogenesis; peptidoglycan recycling. Its function is as follows. Plays a role in peptidoglycan recycling by cleaving the terminal beta-1,4-linked N-acetylglucosamine (GlcNAc) from peptide-linked peptidoglycan fragments, giving rise to free GlcNAc, anhydro-N-acetylmuramic acid and anhydro-N-acetylmuramic acid-linked peptides. In Hydrogenovibrio crunogenus (strain DSM 25203 / XCL-2) (Thiomicrospira crunogena), this protein is Beta-hexosaminidase.